The following is a 661-amino-acid chain: Galactan 5-O-arabinofuranosyltransferase (661 aa).

13 helical membrane passes run 26-46 (LVAI…LWMG), 64-84 (VASA…WLWL), 108-128 (ALTY…VLAI), 194-214 (AFQP…VPVW), 217-237 (ITGS…IILA), 243-263 (PYAA…SRIA), 265-285 (GDKF…TFYT), 286-306 (LFTG…AAIV), 312-332 (PLLW…ISWG), 362-382 (VPFL…IYLV), 393-413 (MWVG…ITLL), 418-438 (LGFR…VLGI), and 458-478 (TATH…LYYA).

The protein belongs to the glycosyltransferase 85 family.

The protein localises to the cell membrane. The catalysed reaction is Adds an alpha-D-arabinofuranosyl group from trans,octacis-decaprenylphospho-beta-D-arabinofuranose at the 5-O-position of the eighth, tenth and twelfth galactofuranose unit of the galactofuranan chain of [beta-D-galactofuranosyl-(1-&gt;5)-beta-D-galactofuranosyl-(1-&gt;6)]14-beta-D-galactofuranosyl-(1-&gt;5)-beta-D-galactofuranosyl-(1-&gt;4)-alpha-L-rhamnopyranosyl-(1-&gt;3)-N-acetyl-alpha-D-glucosaminyl-diphospho-trans,octacis-decaprenol.. The protein operates within cell wall biogenesis; cell wall polysaccharide biosynthesis. In terms of biological role, involved in the biosynthesis of the arabinogalactan (AG) region of the mycolylarabinogalactan-peptidoglycan (mAGP) complex, an essential component of the cell wall. Catalyzes the addition of the first key arabinofuranosyl (Araf) residue from the sugar donor decaprenyl-phospho-arabinose (DPA) on the C-5 of a 6-linked galactofuranosyl (Galf) of the galactan domain, thus 'priming' the galactan for further elaboration by other arabinofuranosyltransferases. This is Galactan 5-O-arabinofuranosyltransferase from Corynebacterium glutamicum (strain ATCC 13032 / DSM 20300 / JCM 1318 / BCRC 11384 / CCUG 27702 / LMG 3730 / NBRC 12168 / NCIMB 10025 / NRRL B-2784 / 534).